The primary structure comprises 295 residues: bZIP transcription factor RISBZ5 (295 aa).

Residues 16 to 26 (REEAGAGDRKP) are compositionally biased toward basic and acidic residues. The segment at 16–157 (REEAGAGDRK…ARRSRRRKQA (142 aa)) is disordered. Positions 109–119 (SDSDSDCDSLL) are enriched in acidic residues. Positions 120–136 (EAERSPRLRGTKSTETK) are enriched in basic and acidic residues. The 64-residue stretch at 134-197 (ETKRIRRMVS…NTAVTDNRIL (64 aa)) folds into the bZIP domain. The interval 136–155 (KRIRRMVSNRESARRSRRRK) is basic motif. The interval 162–176 (LESQVEQLKGENSSL) is leucine-zipper.

Homodimer.

The protein localises to the nucleus. Its function is as follows. Probable transcription factor that binds to the DNA specific sequence 5'-TGAGTCA-3' found in seed storage protein gene promoters. May function as a negative regulator in cold and drought stress responses. This is bZIP transcription factor RISBZ5 from Oryza sativa subsp. japonica (Rice).